A 180-amino-acid chain; its full sequence is uncharacterized protein (180 aa).

The protein to H.influenzae HI_0656.1.

This is an uncharacterized protein from Escherichia coli (strain K12).